A 407-amino-acid chain; its full sequence is Digeranylgeranylglycerophospholipid reductase (407 aa).

Positions 15, 34, 45, 46, 48, 99, 123, 281, 293, and 294 each coordinate FAD.

Belongs to the geranylgeranyl reductase family. DGGGPL reductase subfamily. It depends on FAD as a cofactor.

It carries out the reaction a 2,3-bis-O-phytanyl-sn-glycerol 1-phospholipid + 8 oxidized 2[4Fe-4S]-[ferredoxin] = a 2,3-bis-O-(geranylgeranyl)-sn-glycerol 1-phospholipid + 8 reduced 2[4Fe-4S]-[ferredoxin] + 16 H(+). The catalysed reaction is 2,3-bis-O-(phytanyl)-sn-glycerol 1-phosphate + 8 oxidized 2[4Fe-4S]-[ferredoxin] = 2,3-bis-O-(geranylgeranyl)-sn-glycerol 1-phosphate + 8 reduced 2[4Fe-4S]-[ferredoxin] + 16 H(+). The enzyme catalyses a 2,3-bis-O-phytanyl-sn-glycerol 1-phospholipid + 8 A = a 2,3-bis-O-(geranylgeranyl)-sn-glycerol 1-phospholipid + 8 AH2. It catalyses the reaction CDP-2,3-bis-O-(geranylgeranyl)-sn-glycerol + 8 AH2 = CDP-2,3-bis-O-(phytanyl)-sn-glycerol + 8 A. It carries out the reaction archaetidylserine + 8 AH2 = 2,3-bis-O-phytanyl-sn-glycero-3-phospho-L-serine + 8 A. Its pathway is membrane lipid metabolism; glycerophospholipid metabolism. Is involved in the reduction of 2,3-digeranylgeranylglycerophospholipids (unsaturated archaeols) into 2,3-diphytanylglycerophospholipids (saturated archaeols) in the biosynthesis of archaeal membrane lipids. Catalyzes the formation of archaetidic acid (2,3-di-O-phytanyl-sn-glyceryl phosphate) from 2,3-di-O-geranylgeranylglyceryl phosphate (DGGGP) via the hydrogenation of each double bond of the isoprenoid chains. Requires the adjacently encoded ferredoxin MA_1485 as the electron donor. Is also probably able to reduce double bonds of geranyl groups in CDP-2,3-bis-O-(geranylgeranyl)-sn-glycerol and archaetidylserine, thus acting at various stages in the biosynthesis of archaeal membrane lipids. This chain is Digeranylgeranylglycerophospholipid reductase, found in Methanosarcina acetivorans (strain ATCC 35395 / DSM 2834 / JCM 12185 / C2A).